The following is a 359-amino-acid chain: Membrane-bound lytic murein transglycosylase C (359 aa).

The first 16 residues, 1–16 (MKKYLALALIAPLLIS), serve as a signal peptide directing secretion. Cysteine 17 carries the N-palmitoyl cysteine lipid modification. Cysteine 17 carries the S-diacylglycerol cysteine lipid modification.

It belongs to the transglycosylase Slt family.

The protein localises to the cell outer membrane. It carries out the reaction Exolytic cleavage of the (1-&gt;4)-beta-glycosidic linkage between N-acetylmuramic acid (MurNAc) and N-acetylglucosamine (GlcNAc) residues in peptidoglycan, from either the reducing or the non-reducing ends of the peptidoglycan chains, with concomitant formation of a 1,6-anhydrobond in the MurNAc residue.. Murein-degrading enzyme. May play a role in recycling of muropeptides during cell elongation and/or cell division. The polypeptide is Membrane-bound lytic murein transglycosylase C (Shigella sonnei (strain Ss046)).